The primary structure comprises 277 residues: ATP synthase subunit delta (277 aa).

It belongs to the ATPase delta chain family. As to quaternary structure, F-type ATPases have 2 components, F(1) - the catalytic core - and F(0) - the membrane proton channel. F(1) has five subunits: alpha(3), beta(3), gamma(1), delta(1), epsilon(1). F(0) has three main subunits: a(1), b(2) and c(10-14). The alpha and beta chains form an alternating ring which encloses part of the gamma chain. F(1) is attached to F(0) by a central stalk formed by the gamma and epsilon chains, while a peripheral stalk is formed by the delta and b chains.

Its subcellular location is the cell membrane. In terms of biological role, f(1)F(0) ATP synthase produces ATP from ADP in the presence of a proton or sodium gradient. F-type ATPases consist of two structural domains, F(1) containing the extramembraneous catalytic core and F(0) containing the membrane proton channel, linked together by a central stalk and a peripheral stalk. During catalysis, ATP synthesis in the catalytic domain of F(1) is coupled via a rotary mechanism of the central stalk subunits to proton translocation. This protein is part of the stalk that links CF(0) to CF(1). It either transmits conformational changes from CF(0) to CF(1) or is implicated in proton conduction. In Bifidobacterium animalis subsp. lactis (strain AD011), this protein is ATP synthase subunit delta.